Consider the following 304-residue polypeptide: ADP-polyphosphate phosphotransferase (304 aa).

It belongs to the polyphosphate kinase 2 (PPK2) family. Class I subfamily.

The catalysed reaction is [phosphate](n) + ATP = [phosphate](n+1) + ADP. In terms of biological role, uses inorganic polyphosphate (polyP) as a donor to convert ADP to ATP. The sequence is that of ADP-polyphosphate phosphotransferase from Pseudomonas aeruginosa (strain ATCC 15692 / DSM 22644 / CIP 104116 / JCM 14847 / LMG 12228 / 1C / PRS 101 / PAO1).